The following is a 785-amino-acid chain: MTAAHTRILELRAELDQHNYRYHVLDEPSIPDAEYDRLFHELKALEAEHPDLVTRDSPTQRVGSAALSAFTQVKHDIPMLSLGNAFDETTMLEFDRRVTEGLDLPVGDLFGGGAAVEYSCEPKLDGLAVSLLYQDGELVRGATRGDGTTGEDISVNIRTVRNIPLKLHGSGWPATLEVRGEVFMSKAGFERLNASQLEVGGKTFANPRNAAAGSLRQLDSKITASRPLEFCCYGVTTDISDTHIGNLQQLKKWGMPISHELKLAKGIQDCLDYYRDIGERRNSLPYEIDGVVFKVNSIASQRELGFRAREPRWAIAHKFPAMEELTELLDVEFQVGRTGAVTPVARLKPVKVAGVTVSNATLHNMDEVARLGLMIGDTVIIRRAGDVIPQVVSVVPERRPENARAVQIPESCPVCGSHVERTQLVKRSKGKETVSEGAVYRCVGRLACGAQLKQAIIHFVSRRAMDIDGLGDKTIEQLVDEKLIGSPADLYTLKYEQIIDLEGFADISSKKLITAIENSKTPTLARFIYALGIPDVGEETAKVLARSLASLERVQKALPEVLTYLPDVGLEVAHEIHSFFEDSHNQDVIGALLSPQACGLQLQDQGELSAEFAASTTLGGLLDKLHVPSVGPGAAQKLADKFVTLEGVIKADWLDMRQALPEKQAKAVREFFDNADNANHALAIEQQLKDFGMHWDSEKKVVEGLPEAGHTWVLTGSLELMSRDVAKDKLESLGAKVAGSVSAKTHCVVAGPGAGSKLAKASELGLKVLDEEAFVAFLAKHNIPV.

NAD(+)-binding positions include 32–36, 81–82, and Glu-121; these read DAEYD and SL. The active-site N6-AMP-lysine intermediate is Lys-123. The NAD(+) site is built by Arg-144, Glu-181, Lys-294, and Lys-318. Zn(2+)-binding residues include Cys-412, Cys-415, Cys-442, and Cys-448. A BRCT domain is found at 702–785; it reads VEGLPEAGHT…AFLAKHNIPV (84 aa).

The protein belongs to the NAD-dependent DNA ligase family. LigA subfamily. Mg(2+) is required as a cofactor. It depends on Mn(2+) as a cofactor.

The enzyme catalyses NAD(+) + (deoxyribonucleotide)n-3'-hydroxyl + 5'-phospho-(deoxyribonucleotide)m = (deoxyribonucleotide)n+m + AMP + beta-nicotinamide D-nucleotide.. Its function is as follows. DNA ligase that catalyzes the formation of phosphodiester linkages between 5'-phosphoryl and 3'-hydroxyl groups in double-stranded DNA using NAD as a coenzyme and as the energy source for the reaction. It is essential for DNA replication and repair of damaged DNA. In Pseudomonas fluorescens (strain SBW25), this protein is DNA ligase.